We begin with the raw amino-acid sequence, 330 residues long: Malate dehydrogenase (330 aa).

15 to 21 (GAGGQIG) lines the NAD(+) pocket. 2 residues coordinate substrate: Arg-95 and Arg-101. NAD(+)-binding positions include Asn-108, Gln-115, and 132-134 (VGN). Asn-134 and Arg-165 together coordinate substrate. Residue His-190 is the Proton acceptor of the active site.

This sequence belongs to the LDH/MDH superfamily. MDH type 2 family.

The catalysed reaction is (S)-malate + NAD(+) = oxaloacetate + NADH + H(+). Functionally, catalyzes the reversible oxidation of malate to oxaloacetate. This Corynebacterium jeikeium (strain K411) protein is Malate dehydrogenase.